A 318-amino-acid chain; its full sequence is Ribosomal RNA small subunit methyltransferase H (318 aa).

S-adenosyl-L-methionine contacts are provided by residues 38 to 40 (AGH), Asp57, Leu91, Asp105, and Gln112.

The protein belongs to the methyltransferase superfamily. RsmH family.

The protein resides in the cytoplasm. The catalysed reaction is cytidine(1402) in 16S rRNA + S-adenosyl-L-methionine = N(4)-methylcytidine(1402) in 16S rRNA + S-adenosyl-L-homocysteine + H(+). Specifically methylates the N4 position of cytidine in position 1402 (C1402) of 16S rRNA. The sequence is that of Ribosomal RNA small subunit methyltransferase H from Clavibacter michiganensis subsp. michiganensis (strain NCPPB 382).